The primary structure comprises 410 residues: MQIYKVGGAVRDRLLGRPVTDIDWVVVGASSDEMLARGYRPVGADFPVFLHPQSGEEYALARTERKSGRGYGGFTFHASPEVTLEEDLTRRDLTINAMAEDEQGRVIDPYGGQADLEARLLRHVSPAFAEDPLRVLRVARFAARYAGLGFRVAAETLALMRQLAESGELQALTPERSWKEISRALMEPNPEVFIQVLHDCGALAELIPEVEALFGVPQPAAHHPEIDTGVHVLSVLQQCARHRQPLSVRWACLLHDLGKGLTSEADWPRHIAHETRGVPLIDAVNQRFRVPRDCQELARLVGEYHTHAHRALELRPNTLLELLQSFDVYRRPQRFEEFVAASEMDARGRLGLEQRDYPQAAYLLGAAQAARAVSVKPLVEKGLKGAELGEALKCARLAALKAYKEERGKA.

ATP contacts are provided by G8 and R11. G8 and R11 together coordinate CTP. Residues D21 and D23 each contribute to the Mg(2+) site. Positions 91, 137, and 140 each coordinate ATP. CTP contacts are provided by R91, R137, and R140. Residues 228-329 enclose the HD domain; the sequence is TGVHVLSVLQ…LELLQSFDVY (102 aa).

The protein belongs to the tRNA nucleotidyltransferase/poly(A) polymerase family. Bacterial CCA-adding enzyme type 1 subfamily. Monomer. Can also form homodimers and oligomers. Requires Mg(2+) as cofactor. Ni(2+) is required as a cofactor.

It carries out the reaction a tRNA precursor + 2 CTP + ATP = a tRNA with a 3' CCA end + 3 diphosphate. The enzyme catalyses a tRNA with a 3' CCA end + 2 CTP + ATP = a tRNA with a 3' CCACCA end + 3 diphosphate. Catalyzes the addition and repair of the essential 3'-terminal CCA sequence in tRNAs without using a nucleic acid template. Adds these three nucleotides in the order of C, C, and A to the tRNA nucleotide-73, using CTP and ATP as substrates and producing inorganic pyrophosphate. tRNA 3'-terminal CCA addition is required both for tRNA processing and repair. Also involved in tRNA surveillance by mediating tandem CCA addition to generate a CCACCA at the 3' terminus of unstable tRNAs. While stable tRNAs receive only 3'-terminal CCA, unstable tRNAs are marked with CCACCA and rapidly degraded. The polypeptide is Multifunctional CCA protein (Pseudomonas aeruginosa (strain LESB58)).